The sequence spans 1546 residues: DNA-directed RNA polymerase subunit beta' (1546 aa).

Zn(2+)-binding residues include C57, C59, C72, and C75. Positions 756, 758, and 760 each coordinate Mg(2+). Zn(2+) contacts are provided by C1130, C1211, C1218, and C1221. The interval 1512–1546 (LEKYGEGSTSSDAVTGGQRYDDTRPGSSINPGYGD) is disordered. Residues 1536–1546 (PGSSINPGYGD) are compositionally biased toward polar residues.

It belongs to the RNA polymerase beta' chain family. As to quaternary structure, the RNAP catalytic core consists of 2 alpha, 1 beta, 1 beta' and 1 omega subunit. When a sigma factor is associated with the core the holoenzyme is formed, which can initiate transcription. Mg(2+) serves as cofactor. The cofactor is Zn(2+).

The catalysed reaction is RNA(n) + a ribonucleoside 5'-triphosphate = RNA(n+1) + diphosphate. DNA-dependent RNA polymerase catalyzes the transcription of DNA into RNA using the four ribonucleoside triphosphates as substrates. The polypeptide is DNA-directed RNA polymerase subunit beta' (Deinococcus radiodurans (strain ATCC 13939 / DSM 20539 / JCM 16871 / CCUG 27074 / LMG 4051 / NBRC 15346 / NCIMB 9279 / VKM B-1422 / R1)).